The chain runs to 405 residues: L-rhamnonate dehydratase (405 aa).

Substrate contacts are provided by histidine 33 and arginine 59. Positions 226, 252, and 280 each coordinate Mg(2+). Histidine 329 (proton acceptor) is an active-site residue. Glutamate 349 is a binding site for substrate.

Belongs to the mandelate racemase/muconate lactonizing enzyme family. RhamD subfamily. In terms of assembly, homooctamer; tetramer of dimers. The cofactor is Mg(2+).

The enzyme catalyses L-rhamnonate = 2-dehydro-3-deoxy-L-rhamnonate + H2O. Its function is as follows. Catalyzes the dehydration of L-rhamnonate to 2-keto-3-deoxy-L-rhamnonate (KDR). In Salmonella paratyphi A (strain AKU_12601), this protein is L-rhamnonate dehydratase.